The following is a 577-amino-acid chain: Arginine--tRNA ligase (577 aa).

The 'HIGH' region motif lies at 122–132; sequence PNVAKEMHVGH.

Belongs to the class-I aminoacyl-tRNA synthetase family. In terms of assembly, monomer.

Its subcellular location is the cytoplasm. It carries out the reaction tRNA(Arg) + L-arginine + ATP = L-arginyl-tRNA(Arg) + AMP + diphosphate. The polypeptide is Arginine--tRNA ligase (Escherichia coli (strain K12 / MC4100 / BW2952)).